Consider the following 428-residue polypeptide: MEAKMNKIDTNVVELEIKVDAKDFNEALKKSYNKNSKKFNIPGFRKGKVPMNMVKKFYGVEVLFDDAINACIDKTYGVALEENNVRPVDYPQIEVVEVGEGKDLVYKAKVTTYPEVTLGDYKGLEVEEVSYEVKEEDIEKQLADMQARNARVETKEEGTVENGNIAVIDFKGFIDDVAFEGGEGKDYPLEIGSGSFIDNFEEQLVGLKVGESKDVNVTFPEAYGKEDLNGKPAKFEVTVKEIKVKELPALDDEFAKEVSEFDTLEELKADLKEKAVKANELRAKREMEEKVINAVVDNAKVEIPEAMINREVENMVRDLEMRLGQQGLSLEQYYEFTGSTEDKMKSYMKENAERKVKTDLVMSAVTEAEAIEATEEELKAKAEEVAKMYSNGAETEKMVDLLLNAQRAALELDVKREKTLKMLFESLK.

A PPIase FKBP-type domain is found at 163-248; sequence GNIAVIDFKG…VKEIKVKELP (86 aa).

The protein belongs to the FKBP-type PPIase family. Tig subfamily.

The protein resides in the cytoplasm. The catalysed reaction is [protein]-peptidylproline (omega=180) = [protein]-peptidylproline (omega=0). Its function is as follows. Involved in protein export. Acts as a chaperone by maintaining the newly synthesized protein in an open conformation. Functions as a peptidyl-prolyl cis-trans isomerase. The polypeptide is Trigger factor (Clostridium perfringens (strain ATCC 13124 / DSM 756 / JCM 1290 / NCIMB 6125 / NCTC 8237 / Type A)).